The sequence spans 182 residues: Translation initiation factor IF-3 (182 aa).

The tract at residues 1 to 22 (MPLGDCNISTPDNKQNRKNQEI) is disordered.

The protein belongs to the IF-3 family. Monomer.

It localises to the cytoplasm. In terms of biological role, IF-3 binds to the 30S ribosomal subunit and shifts the equilibrium between 70S ribosomes and their 50S and 30S subunits in favor of the free subunits, thus enhancing the availability of 30S subunits on which protein synthesis initiation begins. The protein is Translation initiation factor IF-3 of Xanthomonas campestris pv. campestris (strain ATCC 33913 / DSM 3586 / NCPPB 528 / LMG 568 / P 25).